Here is a 417-residue protein sequence, read N- to C-terminus: Lysosome-associated membrane glycoprotein 1 (417 aa).

The N-terminal stretch at 1-28 (MAAPGSARRPLLLLLLLLLLGLMHCASA) is a signal peptide. Residues 29–194 (AMFMVKNGNG…SRGETRCEQD (166 aa)) form a first lumenal domain region. Topologically, residues 29 to 382 (AMFMVKNGNG…EECLLDENSM (354 aa)) are lumenal. 2 N-linked (GlcNAc...) asparagine glycosylation sites follow: asparagine 37 and asparagine 45. A disulfide bridge links cysteine 41 with cysteine 80. Residue asparagine 62 is glycosylated (N-linked (GlcNAc...) (polylactosaminoglycan) asparagine). 4 N-linked (GlcNAc...) asparagine glycosylation sites follow: asparagine 76, asparagine 84, asparagine 103, and asparagine 107. N-linked (GlcNAc...) (polylactosaminoglycan) asparagine glycosylation is found at asparagine 121 and asparagine 130. A disulfide bridge connects residues cysteine 155 and cysteine 191. N-linked (GlcNAc...) asparagine glycans are attached at residues asparagine 165 and asparagine 181. The tract at residues 184–221 (FSRGETRCEQDRPSPTTAPPAPPSPSPSPVPKSPSVDK) is disordered. The tract at residues 195–227 (RPSPTTAPPAPPSPSPSPVPKSPSVDKYNVSGT) is hinge. Residue serine 197 is glycosylated (O-linked (GalNAc...) serine; partial). Threonine 199 and threonine 200 each carry an O-linked (GalNAc...) threonine glycan. Positions 199-215 (TTAPPAPPSPSPSPVPK) are enriched in pro residues. O-linked (GalNAc...) serine glycosylation is found at serine 207, serine 209, and serine 211. N-linked (GlcNAc...) (polylactosaminoglycan) asparagine glycosylation is found at asparagine 223 and asparagine 228. Residues 228–382 (NGTCLLASMG…EECLLDENSM (155 aa)) are second lumenal domain. Cysteine 231 and cysteine 269 form a disulfide bridge. N-linked (GlcNAc...) asparagine glycosylation is found at asparagine 241, asparagine 249, asparagine 261, asparagine 293, and asparagine 322. Cysteine 338 and cysteine 375 are disulfide-bonded. Residues 383-410 (LIPIAVGGALAGLVLIVLIAYLVGRKRS) traverse the membrane as a helical segment. The Cytoplasmic portion of the chain corresponds to 411-417 (HAGYQTI).

The protein belongs to the LAMP family. As to quaternary structure, interacts with ABCB9; this interaction strongly stabilizes ABCB9 and protects ABCB9 against lysosomal degradation. Interacts with FURIN. Interacts with TMEM175; inhibiting the proton channel activity of TMEM175. In terms of assembly, (Microbial infection) Interacts with Lassa virus protein glycoprotein. (Microbial infection) Interacts with mumps virus protein F; this interaction promotes protein F cleavage by FURIN. O- and N-glycosylated; some of the 18 N-linked glycans are polylactosaminoglycans. Post-translationally, (Microbial infection) The glycosylation of Asn-76 is essential for Lassa virus entry into cells.

The protein resides in the lysosome membrane. It is found in the endosome membrane. It localises to the late endosome membrane. Its subcellular location is the cell membrane. The protein localises to the cytolytic granule membrane. Its function is as follows. Lysosomal membrane glycoprotein which plays an important role in lysosome biogenesis, lysosomal pH regulation, autophagy and cholesterol homeostasis. Acts as an important regulator of lysosomal lumen pH regulation by acting as a direct inhibitor of the proton channel TMEM175, facilitating lysosomal acidification for optimal hydrolase activity. Also plays an important role in NK-cells cytotoxicity. Mechanistically, participates in cytotoxic granule movement to the cell surface and perforin trafficking to the lytic granule. In addition, protects NK-cells from degranulation-associated damage induced by their own cytotoxic granule content. Presents carbohydrate ligands to selectins. (Microbial infection) Acts as a receptor for Lassa virus glycoprotein. Also promotes fusion of the virus with host membrane in less acidic endosomes. In terms of biological role, (Microbial infection) Supports the FURIN-mediated cleavage of mumps virus fusion protein F by interacting with both FURIN and the unprocessed form but not the processed form of the viral protein F. The chain is Lysosome-associated membrane glycoprotein 1 from Homo sapiens (Human).